Reading from the N-terminus, the 329-residue chain is Putative helicase 109L (329 aa).

Positions 105 to 259 (LTLLTQHKSC…LFDMFFGPEM (155 aa)) constitute a Helicase ATP-binding domain. Residue 118-125 (CYTGFGKT) participates in ATP binding. Positions 212-215 (DEAH) match the DEAH box motif.

This sequence belongs to the DEAD box helicase family. DEAH subfamily.

This is Putative helicase 109L from Invertebrate iridescent virus 3 (IIV-3).